Here is a 70-residue protein sequence, read N- to C-terminus: MFGLGGQELILILLIILLLFGAKKLPELARGLGKGMKEFKKAQTEIEDEFNKVVDEPPRKTPENSTGSKS.

Residues 1-21 (MFGLGGQELILILLIILLLFG) traverse the membrane as a helical segment. Positions 50-62 (FNKVVDEPPRKTP) are enriched in basic and acidic residues. The tract at residues 50 to 70 (FNKVVDEPPRKTPENSTGSKS) is disordered.

This sequence belongs to the TatA/E family. As to quaternary structure, forms a complex with TatC.

The protein resides in the cell inner membrane. Functionally, part of the twin-arginine translocation (Tat) system that transports large folded proteins containing a characteristic twin-arginine motif in their signal peptide across membranes. TatA could form the protein-conducting channel of the Tat system. The polypeptide is Sec-independent protein translocase protein TatA (Chlorobium limicola (strain DSM 245 / NBRC 103803 / 6330)).